Consider the following 100-residue polypeptide: Aspartyl/glutamyl-tRNA(Asn/Gln) amidotransferase subunit C (100 aa).

The protein belongs to the GatC family. In terms of assembly, heterotrimer of A, B and C subunits.

The catalysed reaction is L-glutamyl-tRNA(Gln) + L-glutamine + ATP + H2O = L-glutaminyl-tRNA(Gln) + L-glutamate + ADP + phosphate + H(+). The enzyme catalyses L-aspartyl-tRNA(Asn) + L-glutamine + ATP + H2O = L-asparaginyl-tRNA(Asn) + L-glutamate + ADP + phosphate + 2 H(+). Functionally, allows the formation of correctly charged Asn-tRNA(Asn) or Gln-tRNA(Gln) through the transamidation of misacylated Asp-tRNA(Asn) or Glu-tRNA(Gln) in organisms which lack either or both of asparaginyl-tRNA or glutaminyl-tRNA synthetases. The reaction takes place in the presence of glutamine and ATP through an activated phospho-Asp-tRNA(Asn) or phospho-Glu-tRNA(Gln). The chain is Aspartyl/glutamyl-tRNA(Asn/Gln) amidotransferase subunit C from Streptococcus pneumoniae (strain Hungary19A-6).